We begin with the raw amino-acid sequence, 278 residues long: MSTLRVLHEKSELGKTTVYPKEYTPHLLLPIPRDLNRKTLNVNVSEPPPFYGYDLWNAYELSWLNEKGKPFAARGEFIIPATSSHLIESKSFKLYLNSFNNERFADAAAVSQTMKRDLSKRVNESVTVNFILHETEIPVAYSPKGSLLDVLDIAIDTYSPDPNLLSTSQETVTETLYSHLLKSNCPVTGQPDWGSIEIHYTGPKIDHAQLLKYIISYRNHEEFHEACVERFFMDILRHCRPQELTVQARYTRRGGLDINPYRSTNPTFSVQNHRSFRQ.

Residue 87–89 coordinates substrate; the sequence is IES. 89–90 is an NADPH binding site; it reads SK. The active-site Thioimide intermediate is Cys-185. Catalysis depends on Asp-192, which acts as the Proton donor. 224–225 lines the substrate pocket; that stretch reads HE. 253–254 contributes to the NADPH binding site; that stretch reads RG. Positions 255 to 278 are disordered; that stretch reads GLDINPYRSTNPTFSVQNHRSFRQ. Positions 261 to 278 are enriched in polar residues; the sequence is YRSTNPTFSVQNHRSFRQ.

The protein belongs to the GTP cyclohydrolase I family. QueF type 2 subfamily. Homodimer.

It is found in the cytoplasm. It catalyses the reaction 7-aminomethyl-7-carbaguanine + 2 NADP(+) = 7-cyano-7-deazaguanine + 2 NADPH + 3 H(+). Its pathway is tRNA modification; tRNA-queuosine biosynthesis. Catalyzes the NADPH-dependent reduction of 7-cyano-7-deazaguanine (preQ0) to 7-aminomethyl-7-deazaguanine (preQ1). This is NADPH-dependent 7-cyano-7-deazaguanine reductase from Coxiella burnetii (strain CbuK_Q154) (Coxiella burnetii (strain Q154)).